A 294-amino-acid polypeptide reads, in one-letter code: MTIRLLGRTEIRRLAKDIDFRPRKSFGQNFVHDANTVRRIVSASGVHRHDHVLKVGPGLGSLTLALLDRGAHVTAVEIDPLLAQQLPTTIADHSHSEINRLTVLNQDILTLMPSDLENQPTALVANLPYNVAVPALLHLLAEFPTIRSVMVMVQAEVAERLAADPGGKDYGVPSAKVRFYGNVRRYGMVSPTVFWPIPRVYSGLVRIDRYETSPWPTDADFRAQVFDLIDIAFAQRRKTSRNAFAEWAGSGNESARRLLAASIDPSRRGETLAIADFVRLLQRSGEAEEQVRVQ.

Positions 29, 31, 56, 77, 107, and 126 each coordinate S-adenosyl-L-methionine.

This sequence belongs to the class I-like SAM-binding methyltransferase superfamily. rRNA adenine N(6)-methyltransferase family. RsmA subfamily.

Its subcellular location is the cytoplasm. The enzyme catalyses adenosine(1518)/adenosine(1519) in 16S rRNA + 4 S-adenosyl-L-methionine = N(6)-dimethyladenosine(1518)/N(6)-dimethyladenosine(1519) in 16S rRNA + 4 S-adenosyl-L-homocysteine + 4 H(+). Its function is as follows. Specifically dimethylates two adjacent adenosines (A1518 and A1519) in the loop of a conserved hairpin near the 3'-end of 16S rRNA in the 30S particle. May play a critical role in biogenesis of 30S subunits. The protein is Ribosomal RNA small subunit methyltransferase A of Mycobacterium sp. (strain MCS).